A 504-amino-acid chain; its full sequence is ATP synthase subunit alpha (504 aa).

169–176 is an ATP binding site; sequence GDRGTGKT.

This sequence belongs to the ATPase alpha/beta chains family. As to quaternary structure, F-type ATPases have 2 components, CF(1) - the catalytic core - and CF(0) - the membrane proton channel. CF(1) has five subunits: alpha(3), beta(3), gamma(1), delta(1), epsilon(1). CF(0) has three main subunits: a(1), b(2) and c(9-12). The alpha and beta chains form an alternating ring which encloses part of the gamma chain. CF(1) is attached to CF(0) by a central stalk formed by the gamma and epsilon chains, while a peripheral stalk is formed by the delta and b chains.

It is found in the cell inner membrane. It catalyses the reaction ATP + H2O + 4 H(+)(in) = ADP + phosphate + 5 H(+)(out). In terms of biological role, produces ATP from ADP in the presence of a proton gradient across the membrane. The alpha chain is a regulatory subunit. The chain is ATP synthase subunit alpha from Leptospira biflexa serovar Patoc (strain Patoc 1 / Ames).